Reading from the N-terminus, the 120-residue chain is cAMP-responsive element-binding protein-like 2 (120 aa).

A disordered region spans residues 1 to 24; sequence MDDSKVVGGKVKKPGKRGRKPAKI. Positions 10–21 are enriched in basic residues; that stretch reads KVKKPGKRGRKP. The bZIP domain occupies 23–86; sequence KIDLKAKLER…MAMDQGKIPS (64 aa). A basic motif region spans residues 29–60; that stretch reads KLERSRQSARECRARKKLRYQYLEELVSSRER. A leucine-zipper region spans residues 62-69; the sequence is ICALREEL. Residues 93–120 are disordered; it reads TGEEQNKSQQNSSRHTKAGKTDANSNSW.

The protein belongs to the bZIP family. ATF subfamily. As to quaternary structure, interacts with CREB1; regulates CREB1 phosphorylation, stability and transcriptional activity. Phosphorylated by AMPK.

The protein localises to the nucleus. Functionally, probable regulator of CREB1 transcriptional activity which is involved in adipose cells differentiation. May also play a regulatory role in the cell cycle. Identification in a chromosomal region frequently deleted in various cancers suggests that it might act as a tumor suppressor. The polypeptide is cAMP-responsive element-binding protein-like 2 (CREBL2) (Homo sapiens (Human)).